A 681-amino-acid polypeptide reads, in one-letter code: PTS system glucose-specific EIICBA component (681 aa).

The PTS EIIC type-1 domain maps to lysine 3–aspartate 414. Transmembrane regions (helical) follow at residues leucine 16–methionine 36, methionine 73–alanine 93, isoleucine 126–alanine 146, phenylalanine 170–tryptophan 190, alanine 199–isoleucine 219, phenylalanine 273–tyrosine 293, valine 303–proline 323, phenylalanine 328–leucine 348, leucine 355–proline 375, and valine 383–valine 403. One can recognise a PTS EIIB type-1 domain in the interval threonine 425–glutamate 506. Cysteine 447 serves as the catalytic Phosphocysteine intermediate; for EIIB activity. The region spanning aspartate 551–glutamine 655 is the PTS EIIA type-1 domain. Histidine 603 acts as the Tele-phosphohistidine intermediate; for EIIA activity in catalysis.

It is found in the cell membrane. The catalysed reaction is N(pros)-phospho-L-histidyl-[protein] + D-glucose(out) = D-glucose 6-phosphate(in) + L-histidyl-[protein]. In terms of biological role, the phosphoenolpyruvate-dependent sugar phosphotransferase system (sugar PTS), a major carbohydrate active transport system, catalyzes the phosphorylation of incoming sugar substrates concomitantly with their translocation across the cell membrane. This system is involved in glucose transport. This chain is PTS system glucose-specific EIICBA component (ptsG), found in Staphylococcus aureus (strain bovine RF122 / ET3-1).